The following is a 181-amino-acid chain: MSDNSPTTPSAPAPEEVEAAMAAHADDELARLQGELAELKAKSAELADQFLRAKAEAENARRRAEDEVAKARKFGIESFAESLLPVADSLDAALAIKEATPQQLREGADATLRQLTSTLERNKVLAINPAAGTKFDPHQHQAISVVPAEQEANTVVAVLQKGYVIAERVLRPALVTVSASK.

This sequence belongs to the GrpE family. As to quaternary structure, homodimer.

It localises to the cytoplasm. Its function is as follows. Participates actively in the response to hyperosmotic and heat shock by preventing the aggregation of stress-denatured proteins, in association with DnaK and GrpE. It is the nucleotide exchange factor for DnaK and may function as a thermosensor. Unfolded proteins bind initially to DnaJ; upon interaction with the DnaJ-bound protein, DnaK hydrolyzes its bound ATP, resulting in the formation of a stable complex. GrpE releases ADP from DnaK; ATP binding to DnaK triggers the release of the substrate protein, thus completing the reaction cycle. Several rounds of ATP-dependent interactions between DnaJ, DnaK and GrpE are required for fully efficient folding. This Verminephrobacter eiseniae (strain EF01-2) protein is Protein GrpE.